Reading from the N-terminus, the 448-residue chain is Tubulin alpha chain, nucleomorph (448 aa).

GTP-binding residues include Gln11, Glu71, Ser140, Gly144, Thr145, Thr179, Asn206, and Asn228. Glu71 contacts Mg(2+). The active site involves Glu254.

Belongs to the tubulin family. As to quaternary structure, dimer of alpha and beta chains. A typical microtubule is a hollow water-filled tube with an outer diameter of 25 nm and an inner diameter of 15 nM. Alpha-beta heterodimers associate head-to-tail to form protofilaments running lengthwise along the microtubule wall with the beta-tubulin subunit facing the microtubule plus end conferring a structural polarity. Microtubules usually have 13 protofilaments but different protofilament numbers can be found in some organisms and specialized cells. The cofactor is Mg(2+).

It catalyses the reaction GTP + H2O = GDP + phosphate + H(+). In terms of biological role, tubulin is the major constituent of microtubules, a cylinder consisting of laterally associated linear protofilaments composed of alpha- and beta-tubulin heterodimers. Microtubules grow by the addition of GTP-tubulin dimers to the microtubule end, where a stabilizing cap forms. Below the cap, tubulin dimers are in GDP-bound state, owing to GTPase activity of alpha-tubulin. The polypeptide is Tubulin alpha chain, nucleomorph (tubA) (Guillardia theta (Cryptophyte)).